The sequence spans 558 residues: Small ribosomal subunit protein bS1 (558 aa).

S1 motif domains lie at 21–87 (GSII…LSRE), 105–171 (SETV…VSRR), 192–260 (GMHV…LGLK), 277–347 (ETKL…LGLK), 364–434 (GVHV…LGIK), and 451–520 (GAII…LTIH).

It belongs to the bacterial ribosomal protein bS1 family.

Its function is as follows. Binds mRNA; thus facilitating recognition of the initiation point. It is needed to translate mRNA with a short Shine-Dalgarno (SD) purine-rich sequence. In Buchnera aphidicola subsp. Acyrthosiphon pisum (strain APS) (Acyrthosiphon pisum symbiotic bacterium), this protein is Small ribosomal subunit protein bS1 (rpsA).